Here is a 569-residue protein sequence, read N- to C-terminus: Formate--tetrahydrofolate ligase (569 aa).

64 to 71 (TPHGEGKT) is a binding site for ATP.

The protein belongs to the formate--tetrahydrofolate ligase family.

The enzyme catalyses (6S)-5,6,7,8-tetrahydrofolate + formate + ATP = (6R)-10-formyltetrahydrofolate + ADP + phosphate. It participates in one-carbon metabolism; tetrahydrofolate interconversion. This chain is Formate--tetrahydrofolate ligase, found in Shewanella sp. (strain MR-7).